Reading from the N-terminus, the 479-residue chain is MAATTTTSSSSRIAYSRHNIPGLHSDSLNPKSISFSSNLHTFSLKSSGSRRQLYSRRTGAVVIMQSMDKVEVDISLSPRVNSVKPSKTVAITDQATALVQAGVPVIRLAAGEPDFDTPAPIVEAGINAIREGHTRYTPNAGTMELRSAISHKLKEENGLSYTPDQILVSNGAKQSIIQAVLAVCSPGDEVLIPAPYWVSYPEMARLADATPVILPTSISEDFLLDPKLLESKLTEKSRLLILCSPSNPTGSVYPRKLLEQIAEIVARHPRLLVISDEIYEHIIYAPATHTSFASLPGMWDRTLTVNGFSKAFAMTGWRLGYIAGPKHFIAACNKIQSQFTSGASSISQKAAVAALGLGYAGGELVATMVKSFRERRDYLVKSFGEIEGVKISEPRGAFYLFIDLSSYYGVEVDGFGSINNSESLCRYLLDKAQVALVPGDAFGDDTCIRISYAASLSTLQAAVERIKKALVTIKPPVPV.

A chloroplast-targeting transit peptide spans 1–79; that stretch reads MAATTTTSSS…VEVDISLSPR (79 aa). An L-aspartate-binding site is contributed by Gly111. 172 to 173 serves as a coordination point for pyridoxal 5'-phosphate; sequence AK. Trp197 and Asn247 together coordinate L-aspartate. Residues Asn247, Tyr279, and 307–309 contribute to the pyridoxal 5'-phosphate site; that span reads GFS. N6-(pyridoxal phosphate)lysine is present on Lys310. Arg318 is a pyridoxal 5'-phosphate binding site. Arg449 lines the L-aspartate pocket.

This sequence belongs to the class-I pyridoxal-phosphate-dependent aminotransferase family. As to quaternary structure, homodimer. Pyridoxal 5'-phosphate is required as a cofactor. As to expression, expressed in flowers, pistils, stamens, ovaries and at lower levels in leaves and sepals.

The protein resides in the plastid. The protein localises to the chloroplast. It catalyses the reaction L-aspartate + 2-oxoglutarate = oxaloacetate + L-glutamate. The enzyme catalyses L-arogenate + oxaloacetate = prephenate + L-aspartate. It carries out the reaction L-arogenate + 2-oxoglutarate = prephenate + L-glutamate. It functions in the pathway amino-acid biosynthesis; L-phenylalanine biosynthesis; L-arogenate from prephenate (L-Asp route): step 1/1. The protein operates within amino-acid biosynthesis; L-phenylalanine biosynthesis; L-arogenate from prephenate (L-Glu route): step 1/1. Its function is as follows. Prokaryotic-type aspartate aminotransferase. Also has a prenate transaminase activity. Involved in the aromatic amino acids biosynthesis pathway via the arogenate route. Required for the transamination of prephenate into arogenate. Can use 2-oxoglutarate, oxaloacetate and prephenate as substrates, but not phenylpyruvate or 4-hydroxyphenylpyruvate. This Petunia hybrida (Petunia) protein is Bifunctional aspartate aminotransferase and glutamate/aspartate-prephenate aminotransferase.